The sequence spans 618 residues: Matrix metalloproteinase-24 (618 aa).

The N-terminal stretch at 1–41 (MPRSRGGRAAPGQAARWSGWRAPGRLLPLLPALCCLAAAAG) is a signal peptide. A propeptide spanning residues 42-128 (AGKPAGADAP…HLSRRRRNKR (87 aa)) is cleaved from the precursor. Residues 42-575 (AGKPAGADAP…IDDVPGSVNA (534 aa)) are Extracellular-facing. The Cysteine switch signature appears at 110-117 (PRCGVPDH). 2 residues coordinate Zn(2+): Cys112 and His255. The active site involves Glu256. Positions 259 and 265 each coordinate Zn(2+). Residues 296-352 (QKIYGPPAEPLEPTRPLPTLPVRRIHSPSERKHERQPRPPRPPLGDRPSTPGAKPNI) form a disordered region. A compositionally biased stretch (pro residues) spans 302–314 (PAEPLEPTRPLPT). Residues 322–332 (SPSERKHERQP) show a composition bias toward basic and acidic residues. Hemopexin repeat units follow at residues 350 to 398 (PNIC…WKGL), 399 to 444 (PARI…GSCL), 446 to 494 (REGI…KGIP), and 495 to 542 (QAPQ…WMGC). Cys353 and Cys542 are oxidised to a cystine. The helical transmembrane segment at 576-596 (VAVVVPCTLSLCLLVLLYTIF) threads the bilayer. The Cytoplasmic segment spans residues 597 to 618 (QFKNKTGPQPVTYYKRPVQEWV). Positions 616–618 (EWV) match the PDZ-binding motif.

Belongs to the peptidase M10A family. Interacts (via PDZ-binding motif) with APBA3 (via PDZ domain). Interacts with GRIP1 and GRIP2. Zn(2+) serves as cofactor. The cofactor is Ca(2+). In terms of processing, cleaved by a furin endopeptidase in the trans-Golgi network. As to expression, predominantly expressed in the nervous system: while enriched in the central nervous system, expression is also detected in the peripheral nervous system, including the trigeminal ganglion. Expression is not restricted to the nervous system: it is also enriched in the thymus, with a lower level of expression present in the aorta. In brain, high expression is present in the brain parenchyma, particularly within the neocortex.

The protein resides in the cell membrane. Its subcellular location is the golgi apparatus. It localises to the trans-Golgi network membrane. The protein localises to the secreted. It is found in the extracellular space. The protein resides in the extracellular matrix. In terms of biological role, metalloprotease that mediates cleavage of N-cadherin (CDH2) and acts as a regulator of neuro-immune interactions and neural stem cell quiescence. Involved in cell-cell interactions between nociceptive neurites and mast cells, possibly by mediating cleavage of CDH2, thereby acting as a mediator of peripheral thermal nociception and inflammatory hyperalgesia. Key regulator of neural stem cells quiescence by mediating cleavage of CDH2, affecting CDH2-mediated anchorage of neural stem cells to ependymocytes in the adult subependymal zone, leading to modulate their quiescence. May play a role in axonal growth. Able to activate progelatinase A. May also be a proteoglycanase involved in degradation of proteoglycans, such as dermatan sulfate and chondroitin sulfate proteoglycans. Cleaves partially fibronectin, but not collagen type I, nor laminin. This chain is Matrix metalloproteinase-24 (Mmp24), found in Rattus norvegicus (Rat).